Reading from the N-terminus, the 105-residue chain is Defensin-like protein 106 (105 aa).

Residues 1–24 form the signal peptide; the sequence is MANTPKTLIAFVFSVIVIISYVHC. 4 disulfide bridges follow: C57/C94, C63/C87, C73/C92, and C77/C93.

This sequence belongs to the DEFL family.

It localises to the secreted. The chain is Defensin-like protein 106 from Arabidopsis thaliana (Mouse-ear cress).